A 187-amino-acid polypeptide reads, in one-letter code: UPF0301 protein Shewmr7_1270 (187 aa).

Belongs to the UPF0301 (AlgH) family.

The protein is UPF0301 protein Shewmr7_1270 of Shewanella sp. (strain MR-7).